The following is a 243-amino-acid chain: Leucyl/phenylalanyl-tRNA--protein transferase (243 aa).

The segment at 1–22 (MHSQPYLLSPTPNTPFPPAEHA) is disordered.

It belongs to the L/F-transferase family.

The protein localises to the cytoplasm. It carries out the reaction N-terminal L-lysyl-[protein] + L-leucyl-tRNA(Leu) = N-terminal L-leucyl-L-lysyl-[protein] + tRNA(Leu) + H(+). It catalyses the reaction N-terminal L-arginyl-[protein] + L-leucyl-tRNA(Leu) = N-terminal L-leucyl-L-arginyl-[protein] + tRNA(Leu) + H(+). The catalysed reaction is L-phenylalanyl-tRNA(Phe) + an N-terminal L-alpha-aminoacyl-[protein] = an N-terminal L-phenylalanyl-L-alpha-aminoacyl-[protein] + tRNA(Phe). Functionally, functions in the N-end rule pathway of protein degradation where it conjugates Leu, Phe and, less efficiently, Met from aminoacyl-tRNAs to the N-termini of proteins containing an N-terminal arginine or lysine. In Xylella fastidiosa (strain M23), this protein is Leucyl/phenylalanyl-tRNA--protein transferase.